The chain runs to 570 residues: Pyruvate decarboxylase (570 aa).

Positions 1–2 (MV) are cleaved as a propeptide — removed in mature form. D33 and H120 together coordinate substrate. Positions 394-476 (DSWFNGIQLK…MLINNRGYTI (83 aa)) are thiamine pyrophosphate binding. 3 residues coordinate Mg(2+): D444, N471, and G473. E477 is a binding site for substrate.

It belongs to the TPP enzyme family. Homomer. A metal cation is required as a cofactor. The cofactor is thiamine diphosphate.

The protein localises to the cytoplasm. The catalysed reaction is a 2-oxocarboxylate + H(+) = an aldehyde + CO2. Its pathway is carbohydrate metabolism; pyruvate metabolism. The protein is Pyruvate decarboxylase (cfp) of Neurospora crassa (strain ATCC 24698 / 74-OR23-1A / CBS 708.71 / DSM 1257 / FGSC 987).